The primary structure comprises 236 residues: Small ribosomal subunit protein uS3c (236 aa).

The 81-residue stretch at Val47–Ala127 folds into the KH type-2 domain.

It belongs to the universal ribosomal protein uS3 family. In terms of assembly, part of the 30S ribosomal subunit.

It is found in the plastid. Its subcellular location is the chloroplast. This Zygnema circumcarinatum (Green alga) protein is Small ribosomal subunit protein uS3c (rps3).